Consider the following 152-residue polypeptide: Interleukin-3 (152 aa).

The first 19 residues, 1–19, serve as a signal peptide directing secretion; it reads MSRLPVLLLLQLLVRPGLQ. N-linked (GlcNAc...) asparagine glycosylation is found at Asn-34 and Asn-89. Cys-35 and Cys-103 form a disulfide bridge.

Belongs to the IL-3 family. Monomer. In terms of tissue distribution, activated T-cells, mast cells, natural killer cells.

It localises to the secreted. Its function is as follows. Granulocyte/macrophage colony-stimulating factors are cytokines that act in hematopoiesis by controlling the production, differentiation, and function of 2 related white cell populations of the blood, the granulocytes and the monocytes-macrophages. In terms of biological role, this CSF induces granulocytes, macrophages, mast cells, stem cells, erythroid cells, eosinophils and megakaryocytes. This chain is Interleukin-3 (IL3), found in Pan troglodytes (Chimpanzee).